The chain runs to 194 residues: dCTP deaminase (194 aa).

DCTP is bound by residues 110 to 115 (RSSLAR), D128, 136 to 138 (VLE), Y171, K178, and Q182. The active-site Proton donor/acceptor is the E138. Residues 175–194 (KDAKYKNQQSAVSSRINQDD) form a disordered region. Polar residues predominate over residues 180 to 194 (KNQQSAVSSRINQDD).

It belongs to the dCTP deaminase family. Homotrimer.

It catalyses the reaction dCTP + H2O + H(+) = dUTP + NH4(+). The protein operates within pyrimidine metabolism; dUMP biosynthesis; dUMP from dCTP (dUTP route): step 1/2. Functionally, catalyzes the deamination of dCTP to dUTP. In Actinobacillus pleuropneumoniae serotype 5b (strain L20), this protein is dCTP deaminase.